The following is a 377-amino-acid chain: Unsaturated 3S-rhamnoglycuronyl hydrolase (377 aa).

Residues 1-25 (MKNQALKILTLCVLVGSAMSLKLYA) form the signal peptide. Catalysis depends on aspartate 161, which acts as the Proton donor.

The protein belongs to the glycosyl hydrolase 105 family.

The protein localises to the periplasm. In terms of biological role, unsaturated beta-glucuronyl hydrolase involved in ulvan degradation. Ulvan is the main polysaccharide component of the Ulvales (green seaweed) cell wall. It is composed of disaccharide building blocks comprising 3-sulfated rhamnose (Rha3S) linked to D-glucuronic acid (GlcA), L-iduronic acid (IduA), or D-xylose (Xyl). Unsaturated 3S-rhamnoglycuronyl hydrolase works together with ulvan lyases to fully degrade the ulvan polymer, catalyzing specifically the cleavage of the unsaturated 4-deoxy-L-threo-hex-4-enopyranosiduronic acid (deltaUA) of deltaUA-Rha3S disaccharides and deltaUA-Rha3S-Xyl-Rha3S tetrasaccharides, the end products of the ulvan lyase reaction. Also hydrolases deltaUA-Rha3S-IduA-Rha3S and deltaUA-Rha3S-GlcA-Rha3S tetrasaccharidestetrasaccharides. Prefers tetrasaccharides over disaccharides and prefers an uronic residue at subsite +2. This Formosa agariphila (strain DSM 15362 / KCTC 12365 / LMG 23005 / KMM 3901 / M-2Alg 35-1) protein is Unsaturated 3S-rhamnoglycuronyl hydrolase.